Consider the following 306-residue polypeptide: MTMAYENFQNLGSEEKNQEAGKAPPQSFLCNILSWTHLLLFSLGLSLLLLVVISVIGSQNSQLRRDLETLRTTLDNTTSNTKAELQALASRGDSLQTGINSLKVEVDDHGQELQAGRGLSQKVASLESTVEKKEQTLRTDLSEITDRVQQLGKDLKTLTCQLASLKNNGSAVACCPLHWMEHEGSCYWFSQSGKPWPEADKYCQLENSNLVVVNSLAEQNFLQTHMGSVVTWIGLTDQNGPWRWVDGTDYEKGFTHWAPKQPDNWYGHGLGGGEDCAHFTSDGRWNDDVCQRPYRWVCEMKLAKDS.

The Cytoplasmic portion of the chain corresponds to 1–37; sequence MTMAYENFQNLGSEEKNQEAGKAPPQSFLCNILSWTH. Residues 38–58 traverse the membrane as a helical; Signal-anchor for type II membrane protein segment; sequence LLLFSLGLSLLLLVVISVIGS. The Extracellular portion of the chain corresponds to 59-306; that stretch reads QNSQLRRDLE…VCEMKLAKDS (248 aa). 2 N-linked (GlcNAc...) asparagine glycosylation sites follow: Asn76 and Asn168. The C-type lectin domain occupies 174 to 300; that stretch reads CCPLHWMEHE…QRPYRWVCEM (127 aa). 3 disulfide bridges follow: Cys175/Cys186, Cys203/Cys298, and Cys276/Cys290.

As to quaternary structure, homooligomer.

Its subcellular location is the membrane. Recognizes terminal galactose and N-acetylgalactosamine units. The chain is C-type lectin domain family 10 member A (Clec10a) from Rattus norvegicus (Rat).